We begin with the raw amino-acid sequence, 910 residues long: Disease susceptibility protein LOV1 (910 aa).

Residues 22–60 are a coiled coil; sequence ARLNGIGEQVDGLKRQLGRLQSLLKDADAKKHESERVRN. An NB-ARC domain is found at 169 to 461; sequence EQSVEALAGH…AAEGIITSSD (293 aa). 6 LRR repeats span residues 584-609, 610-632, 634-655, 700-725, 726-751, and 847-871; these read LPLL…IGDL, IHLR…LRNL, LLLY…LKEM, MTKL…LGQL, RSLE…IVLN, and MPLL…NYIT.

Belongs to the disease resistance NB-LRR family. RPP8/HRT subfamily.

Confers susceptibility to the fungus Cochliobolus victoriae by conditioning victorin-dependent (victorin is a toxin synthesized by C.victoriae) induction of defense-associated proteins. The protein is Disease susceptibility protein LOV1 (LOV1) of Arabidopsis thaliana (Mouse-ear cress).